A 230-amino-acid chain; its full sequence is Orotidine 5'-phosphate decarboxylase (230 aa).

Residues Asp16, Lys38, 65–74, Thr119, Arg180, Gln189, Gly209, and Arg210 each bind substrate; that span reads DLKLHDIGNT. Lys67 functions as the Proton donor in the catalytic mechanism.

The protein belongs to the OMP decarboxylase family. Type 1 subfamily. As to quaternary structure, homodimer.

The enzyme catalyses orotidine 5'-phosphate + H(+) = UMP + CO2. It participates in pyrimidine metabolism; UMP biosynthesis via de novo pathway; UMP from orotate: step 2/2. Functionally, catalyzes the decarboxylation of orotidine 5'-monophosphate (OMP) to uridine 5'-monophosphate (UMP). This is Orotidine 5'-phosphate decarboxylase from Methylobacterium radiotolerans (strain ATCC 27329 / DSM 1819 / JCM 2831 / NBRC 15690 / NCIMB 10815 / 0-1).